A 496-amino-acid chain; its full sequence is Probable CtpA-like serine protease (496 aa).

The segment covering 1 to 16 (MDDKQHTSSSDDERAE) has biased composition (basic and acidic residues). The interval 1 to 27 (MDDKQHTSSSDDERAEIATSNQDQQTN) is disordered. A compositionally biased stretch (polar residues) spans 18-27 (ATSNQDQQTN). A helical membrane pass occupies residues 39 to 59 (FISILIGTILITAVITVVAYI). The PDZ domain occupies 124 to 206 (TKSFNEGVSG…TEVTLTVQRG (83 aa)). Active-site charge relay system residues include serine 329, aspartate 340, and lysine 354.

Belongs to the peptidase S41A family.

Its subcellular location is the cell membrane. The sequence is that of Probable CtpA-like serine protease from Staphylococcus aureus (strain bovine RF122 / ET3-1).